We begin with the raw amino-acid sequence, 640 residues long: Chaperone protein DnaK (640 aa).

Phosphothreonine; by autocatalysis is present on Thr198. The disordered stretch occupies residues 600–640 (KTQGAGAEGSEQPHGEQEAGGAAKGETVVDADFEEVKDDKK). Acidic residues predominate over residues 628-640 (VDADFEEVKDDKK).

It belongs to the heat shock protein 70 family.

Its function is as follows. Acts as a chaperone. The polypeptide is Chaperone protein DnaK (Geobacter sp. (strain M21)).